The following is a 416-amino-acid chain: Argininosuccinate synthase (416 aa).

Residues 19-27 (AYSGGLDTS) and alanine 46 each bind ATP. Tyrosine 97 and serine 102 together coordinate L-citrulline. Glycine 127 provides a ligand contact to ATP. The L-aspartate site is built by threonine 129, asparagine 133, and aspartate 134. Asparagine 133 contacts L-citrulline. The L-citrulline site is built by arginine 137, serine 188, serine 197, glutamate 273, and tyrosine 285.

The protein belongs to the argininosuccinate synthase family. Type 1 subfamily. As to quaternary structure, homotetramer.

It is found in the cytoplasm. The enzyme catalyses L-citrulline + L-aspartate + ATP = 2-(N(omega)-L-arginino)succinate + AMP + diphosphate + H(+). Its pathway is amino-acid biosynthesis; L-arginine biosynthesis; L-arginine from L-ornithine and carbamoyl phosphate: step 2/3. This Granulibacter bethesdensis (strain ATCC BAA-1260 / CGDNIH1) protein is Argininosuccinate synthase.